The sequence spans 351 residues: Cytochrome c biogenesis protein CcsA (351 aa).

The next 8 helical transmembrane spans lie at 17–37 (VLFL…LPAI), 38–58 (NALG…LLGA), 68–88 (LSNL…VHLI), 97–117 (LVGV…TLTL), 143–163 (MMLS…FLVI), 259–279 (IIGL…VWAN), 286–306 (WSWD…AAYL), and 320–340 (AILA…VNLL).

It belongs to the CcmF/CycK/Ccl1/NrfE/CcsA family. In terms of assembly, may interact with ccs1.

It localises to the cellular thylakoid membrane. Functionally, required during biogenesis of c-type cytochromes (cytochrome c6 and cytochrome f) at the step of heme attachment. The sequence is that of Cytochrome c biogenesis protein CcsA from Trichormus variabilis (strain ATCC 29413 / PCC 7937) (Anabaena variabilis).